A 177-amino-acid polypeptide reads, in one-letter code: Protein FATTY ACID EXPORT 4, chloroplastic (177 aa).

Residues 1–63 constitute a chloroplast transit peptide; it reads MWSLALTLPS…AELSELAPVV (63 aa). The next 3 membrane-spanning stretches (helical) occupy residues 85–105, 111–131, and 140–160; these read KGSLFGGLTGSVLMASAYFLT, RVLGDTIGLGAAFLFSSVFGF, and VPAGPLLLLSIGMLSFFVMAY.

The protein belongs to the TMEM14 family.

The protein resides in the plastid. It is found in the chloroplast membrane. In terms of biological role, may be involved in free fatty acids export from the plastids. The sequence is that of Protein FATTY ACID EXPORT 4, chloroplastic from Arabidopsis thaliana (Mouse-ear cress).